The following is a 397-amino-acid chain: Phosphoglycerate kinase (397 aa).

Substrate-binding positions include D21–N23, R37, H60–R63, R119, and R152. Residues K203, G294, E325, and G354–S357 each bind ATP.

This sequence belongs to the phosphoglycerate kinase family. Monomer.

The protein localises to the cytoplasm. It catalyses the reaction (2R)-3-phosphoglycerate + ATP = (2R)-3-phospho-glyceroyl phosphate + ADP. Its pathway is carbohydrate degradation; glycolysis; pyruvate from D-glyceraldehyde 3-phosphate: step 2/5. The chain is Phosphoglycerate kinase from Chlorobium luteolum (strain DSM 273 / BCRC 81028 / 2530) (Pelodictyon luteolum).